The primary structure comprises 304 residues: Non-specific ribonucleoside hydrolase RihC (304 aa).

His233 is an active-site residue.

The protein belongs to the IUNH family. RihC subfamily.

In terms of biological role, hydrolyzes both purine and pyrimidine ribonucleosides with a broad-substrate specificity. This chain is Non-specific ribonucleoside hydrolase RihC, found in Escherichia coli O7:K1 (strain IAI39 / ExPEC).